We begin with the raw amino-acid sequence, 735 residues long: Two pore calcium channel protein 1B (735 aa).

Residues 1-76 (MEEYLLPGES…ELYFMFTRFD (76 aa)) lie on the Cytoplasmic side of the membrane. The helical transmembrane segment at 77–97 (FLWSLNYLALVVLNFFEKPLW) threads the bilayer. Topologically, residues 98–125 (CSKHLAESCNNRDYYYLGELPFLTGAES) are extracellular. A helical membrane pass occupies residues 126-146 (LIFEGVTLLLLIIHILFPISY). Residues 147 to 161 (EGFNLYWRSLLNRLK) lie on the Cytoplasmic side of the membrane. Residues 162 to 182 (VILLLILVADIVVYILLPADF) form a helical membrane-spanning segment. Tyr183 is a topological domain (extracellular). A helical; Voltage-sensor transmembrane segment spans residues 184–202 (YLPFRIAPYLRVVFFILNI). Topologically, residues 203–208 (RELRDS) are cytoplasmic. The helical transmembrane segment at 209 to 229 (FFILAGMLGTYLNVVALSALF) threads the bilayer. The Extracellular portion of the chain corresponds to 230–248 (LLFSSWLAYVFFEDTRQGK). Positions 249–263 (TTFTSYGTTLYQMFV) form an intramembrane region, pore-forming. At 264 to 286 (LFTTSNNPDVWIPAYKDSRWYCL) the chain is on the extracellular side. Residues 287 to 307 (FFVLYVLLGVYFVTNLILAVV) traverse the membrane as a helical segment. Over 308 to 431 (YDSFKSELVK…ASEKLRGFIR (124 aa)) the chain is Cytoplasmic. EF-hand domains are found at residues 325–360 (LRLR…LNKY) and 366–401 (ISGD…IGLR). Residues 432–452 (GATFEYIIVFVLLVNLVAVII) form a helical membrane-spanning segment. At 453-470 (ETTLDIQNNSGQTFWQKV) the chain is on the extracellular side. The N-linked (GlcNAc...) asparagine glycan is linked to Asn460. Residues 471–491 (EFTFGWLYVIEMALKVYTYGF) traverse the membrane as a helical segment. Over 492–501 (ENYWRDGQNR) the chain is Cytoplasmic. A helical membrane pass occupies residues 502 to 522 (FDFIVTWVIVIGETTTFVAPD). Over 523 to 531 (DLTFLSNGE) the chain is Extracellular. The helical; Voltage-sensor transmembrane segment at 532 to 549 (WIRYLLIARMLRLIRLLM) threads the bilayer. Residues 550 to 560 (HVERYRAFVAT) are Cytoplasmic-facing. A helical membrane pass occupies residues 561–581 (FLTLIPSLMPYLGTIFCILCF). Over 582–618 (YCSLGLQIFGGIVNTGNPNLAQTDLAGNDYLLFNFND) the chain is Extracellular. The pore-forming intramembrane region spans 619-633 (YPNGMVTLFNILVMG). The Extracellular segment spans residues 634 to 654 (NWQVWMQSYKELTGTSWTYAY). Residues 655–675 (FVSFYLISVLWLLNLIVAFVL) form a helical membrane-spanning segment. Residues 676–735 (EAFQAEMDLEASARCVDGDDKEAKRERRRNVGTKTRSQRVDFLLHHMLRSELTECSNDNP) lie on the Cytoplasmic side of the membrane.

Belongs to the calcium channel alpha-1 subunit (TC 1.A.1.11) family. Two pore calcium channel subfamily. In terms of assembly, homodimer.

The protein resides in the membrane. Its activity is regulated as follows. Inhibited by Al(3+), La(3+) and Gd(3+). Up-regulated by H(2)O(2), cryptogein, salicylic acid (SA) and cold shock. Its function is as follows. Functions as a voltage-gated inward-rectifying Ca(2+) channel (VDCC) across the plasma membrane that mediates sucrose-induced Ca(2+) influx in autotrophically grown leaf cells. Acts as the major ROS-responsive Ca(2+) channel and is the possible target of Al-dependent inhibition. Plays a regulatory role in defense responses. This chain is Two pore calcium channel protein 1B (TPC1B), found in Nicotiana tabacum (Common tobacco).